The following is a 211-amino-acid chain: Endonuclease III (211 aa).

The 20-residue stretch at 108 to 127 (REALEALAGVGRKTANVVLN) folds into the HhH domain. [4Fe-4S] cluster is bound by residues cysteine 187, cysteine 194, cysteine 197, and cysteine 203.

Belongs to the Nth/MutY family. The cofactor is [4Fe-4S] cluster.

The enzyme catalyses 2'-deoxyribonucleotide-(2'-deoxyribose 5'-phosphate)-2'-deoxyribonucleotide-DNA = a 3'-end 2'-deoxyribonucleotide-(2,3-dehydro-2,3-deoxyribose 5'-phosphate)-DNA + a 5'-end 5'-phospho-2'-deoxyribonucleoside-DNA + H(+). Functionally, DNA repair enzyme that has both DNA N-glycosylase activity and AP-lyase activity. The DNA N-glycosylase activity releases various damaged pyrimidines from DNA by cleaving the N-glycosidic bond, leaving an AP (apurinic/apyrimidinic) site. The AP-lyase activity cleaves the phosphodiester bond 3' to the AP site by a beta-elimination, leaving a 3'-terminal unsaturated sugar and a product with a terminal 5'-phosphate. This is Endonuclease III from Haemophilus influenzae (strain ATCC 51907 / DSM 11121 / KW20 / Rd).